Here is a 341-residue protein sequence, read N- to C-terminus: Holliday junction branch migration complex subunit RuvB (341 aa).

Residues 3–184 (DDFDIRDARM…FGINMHLEYY (182 aa)) form a large ATPase domain (RuvB-L) region. ATP is bound by residues L23, R24, G65, K68, T69, T70, 131–133 (EDY), R174, Y184, and R221. T69 contacts Mg(2+). The segment at 185-255 (DMETLTKIVL…IACFSLEALN (71 aa)) is small ATPAse domain (RuvB-S). Positions 258–341 (RYGLDQIDNK…RVGEQGFLFD (84 aa)) are head domain (RuvB-H). DNA is bound by residues R313 and R318.

This sequence belongs to the RuvB family. In terms of assembly, homohexamer. Forms an RuvA(8)-RuvB(12)-Holliday junction (HJ) complex. HJ DNA is sandwiched between 2 RuvA tetramers; dsDNA enters through RuvA and exits via RuvB. An RuvB hexamer assembles on each DNA strand where it exits the tetramer. Each RuvB hexamer is contacted by two RuvA subunits (via domain III) on 2 adjacent RuvB subunits; this complex drives branch migration. In the full resolvosome a probable DNA-RuvA(4)-RuvB(12)-RuvC(2) complex forms which resolves the HJ.

It is found in the cytoplasm. The enzyme catalyses ATP + H2O = ADP + phosphate + H(+). Its function is as follows. The RuvA-RuvB-RuvC complex processes Holliday junction (HJ) DNA during genetic recombination and DNA repair, while the RuvA-RuvB complex plays an important role in the rescue of blocked DNA replication forks via replication fork reversal (RFR). RuvA specifically binds to HJ cruciform DNA, conferring on it an open structure. The RuvB hexamer acts as an ATP-dependent pump, pulling dsDNA into and through the RuvAB complex. RuvB forms 2 homohexamers on either side of HJ DNA bound by 1 or 2 RuvA tetramers; 4 subunits per hexamer contact DNA at a time. Coordinated motions by a converter formed by DNA-disengaged RuvB subunits stimulates ATP hydrolysis and nucleotide exchange. Immobilization of the converter enables RuvB to convert the ATP-contained energy into a lever motion, pulling 2 nucleotides of DNA out of the RuvA tetramer per ATP hydrolyzed, thus driving DNA branch migration. The RuvB motors rotate together with the DNA substrate, which together with the progressing nucleotide cycle form the mechanistic basis for DNA recombination by continuous HJ branch migration. Branch migration allows RuvC to scan DNA until it finds its consensus sequence, where it cleaves and resolves cruciform DNA. This Parabacteroides distasonis (strain ATCC 8503 / DSM 20701 / CIP 104284 / JCM 5825 / NCTC 11152) protein is Holliday junction branch migration complex subunit RuvB.